The following is a 577-amino-acid chain: Probable cytochrome c biosynthesis protein (577 aa).

The protein belongs to the CcmF/CycK/Ccl1/NrfE/CcsA family.

The protein localises to the mitochondrion. Its function is as follows. Could be involved in assembly and maturation of cytochromes c. May play a role in guidance of apocytochromes and heme groups for the covalent linkage introduced by the cytochrome-c-heme lyase. This chain is Probable cytochrome c biosynthesis protein, found in Oenothera berteroana (Bertero's evening primrose).